Consider the following 176-residue polypeptide: Large ribosomal subunit protein uL10 (176 aa).

This sequence belongs to the universal ribosomal protein uL10 family. In terms of assembly, part of the ribosomal stalk of the 50S ribosomal subunit. The N-terminus interacts with L11 and the large rRNA to form the base of the stalk. The C-terminus forms an elongated spine to which L12 dimers bind in a sequential fashion forming a multimeric L10(L12)X complex.

Functionally, forms part of the ribosomal stalk, playing a central role in the interaction of the ribosome with GTP-bound translation factors. This chain is Large ribosomal subunit protein uL10, found in Coprothermobacter proteolyticus (strain ATCC 35245 / DSM 5265 / OCM 4 / BT).